Reading from the N-terminus, the 240-residue chain is Enolase-phosphatase E1 (240 aa).

Belongs to the HAD-like hydrolase superfamily. MasA/MtnC family. As to quaternary structure, monomer. The cofactor is Mg(2+).

The catalysed reaction is 5-methylsulfanyl-2,3-dioxopentyl phosphate + H2O = 1,2-dihydroxy-5-(methylsulfanyl)pent-1-en-3-one + phosphate. The protein operates within amino-acid biosynthesis; L-methionine biosynthesis via salvage pathway; L-methionine from S-methyl-5-thio-alpha-D-ribose 1-phosphate: step 3/6. It participates in amino-acid biosynthesis; L-methionine biosynthesis via salvage pathway; L-methionine from S-methyl-5-thio-alpha-D-ribose 1-phosphate: step 4/6. Bifunctional enzyme that catalyzes the enolization of 2,3-diketo-5-methylthiopentyl-1-phosphate (DK-MTP-1-P) into the intermediate 2-hydroxy-3-keto-5-methylthiopentenyl-1-phosphate (HK-MTPenyl-1-P), which is then dephosphorylated to form the acireductone 1,2-dihydroxy-3-keto-5-methylthiopentene (DHK-MTPene). The sequence is that of Enolase-phosphatase E1 from Saccharopolyspora erythraea (strain ATCC 11635 / DSM 40517 / JCM 4748 / NBRC 13426 / NCIMB 8594 / NRRL 2338).